Here is a 254-residue protein sequence, read N- to C-terminus: D-aminoacyl-tRNA deacylase (254 aa).

Residues Lys-61–Ile-85 form a disordered region. The span at Thr-65–Glu-84 shows a compositional bias: polar residues.

Belongs to the DtdA deacylase family. Monomer. It depends on Zn(2+) as a cofactor.

The catalysed reaction is a D-aminoacyl-tRNA + H2O = a tRNA + a D-alpha-amino acid + H(+). The enzyme catalyses glycyl-tRNA(Ala) + H2O = tRNA(Ala) + glycine + H(+). Functionally, D-aminoacyl-tRNA deacylase with broad substrate specificity. By recycling D-aminoacyl-tRNA to D-amino acids and free tRNA molecules, this enzyme counteracts the toxicity associated with the formation of D-aminoacyl-tRNA entities in vivo. The sequence is that of D-aminoacyl-tRNA deacylase from Methanococcus maripaludis (strain C5 / ATCC BAA-1333).